The primary structure comprises 201 residues: Histone-like protein HC2 (201 aa).

The tract at residues 1–69 is disordered; that stretch reads MLGVQKKCST…VAKKATAKKA (69 aa). Basic residues-rich tracts occupy residues 8 to 50 and 59 to 69; these read CSTR…KTVA and PVAKKATAKKA.

The protein belongs to the histone H1/H5 family. HCT subfamily.

In terms of biological role, might have a role in establishing the nucleoid structure of elementary bodies. In Chlamydia trachomatis serovar D (strain ATCC VR-885 / DSM 19411 / UW-3/Cx), this protein is Histone-like protein HC2 (hctB).